A 218-amino-acid chain; its full sequence is Small ribosomal subunit protein uS7m (218 aa).

The transit peptide at Met-1–Leu-19 directs the protein to the mitochondrion.

It belongs to the universal ribosomal protein uS7 family. As to quaternary structure, component of the mitochondrial ribosome small subunit (28S) which comprises a 12S rRNA and about 30 distinct proteins.

The protein localises to the mitochondrion. This chain is Small ribosomal subunit protein uS7m (mRpS7), found in Drosophila melanogaster (Fruit fly).